A 217-amino-acid polypeptide reads, in one-letter code: Ranaspumin (217 aa).

4 disulfide bridges follow: cysteine 18-cysteine 67, cysteine 38-cysteine 114, cysteine 125-cysteine 168, and cysteine 146-cysteine 207.

In terms of assembly, monomer. In terms of tissue distribution, exclusively expressed in females in the early oviduct, the glandular part of the oviduct (pars convoluta dilata) and in the cloaca.

The protein localises to the secreted. Functionally, acts as a surfactant. Is the major protein constituent (45%) of foam nests. Has no antimicrobial activity, no larvicidal activity, and is not toxic to mice. The chain is Ranaspumin from Leptodactylus vastus (Northeastern pepper frog).